Consider the following 290-residue polypeptide: Porphobilinogen deaminase (290 aa).

Position 237 is an S-(dipyrrolylmethanemethyl)cysteine (C237).

The protein belongs to the HMBS family. Monomer. Requires dipyrromethane as cofactor.

It catalyses the reaction 4 porphobilinogen + H2O = hydroxymethylbilane + 4 NH4(+). It participates in porphyrin-containing compound metabolism; protoporphyrin-IX biosynthesis; coproporphyrinogen-III from 5-aminolevulinate: step 2/4. Its function is as follows. Tetrapolymerization of the monopyrrole PBG into the hydroxymethylbilane pre-uroporphyrinogen in several discrete steps. The sequence is that of Porphobilinogen deaminase from Clostridium botulinum (strain Loch Maree / Type A3).